Consider the following 97-residue polypeptide: Co-chaperonin GroES (97 aa).

Belongs to the GroES chaperonin family. In terms of assembly, heptamer of 7 subunits arranged in a ring. Interacts with the chaperonin GroEL.

It is found in the cytoplasm. Together with the chaperonin GroEL, plays an essential role in assisting protein folding. The GroEL-GroES system forms a nano-cage that allows encapsulation of the non-native substrate proteins and provides a physical environment optimized to promote and accelerate protein folding. GroES binds to the apical surface of the GroEL ring, thereby capping the opening of the GroEL channel. The sequence is that of Co-chaperonin GroES from Pseudarthrobacter chlorophenolicus (strain ATCC 700700 / DSM 12829 / CIP 107037 / JCM 12360 / KCTC 9906 / NCIMB 13794 / A6) (Arthrobacter chlorophenolicus).